We begin with the raw amino-acid sequence, 332 residues long: Biotin synthase (332 aa).

One can recognise a Radical SAM core domain in the interval 53-282 (HFGKKVKLNM…TKEIRISGGR (230 aa)). Residues C71, C75, and C78 each contribute to the [4Fe-4S] cluster site. [2Fe-2S] cluster-binding residues include C115, C147, C207, and R277.

It belongs to the radical SAM superfamily. Biotin synthase family. Homodimer. It depends on [4Fe-4S] cluster as a cofactor. The cofactor is [2Fe-2S] cluster.

It catalyses the reaction (4R,5S)-dethiobiotin + (sulfur carrier)-SH + 2 reduced [2Fe-2S]-[ferredoxin] + 2 S-adenosyl-L-methionine = (sulfur carrier)-H + biotin + 2 5'-deoxyadenosine + 2 L-methionine + 2 oxidized [2Fe-2S]-[ferredoxin]. The protein operates within cofactor biosynthesis; biotin biosynthesis; biotin from 7,8-diaminononanoate: step 2/2. Catalyzes the conversion of dethiobiotin (DTB) to biotin by the insertion of a sulfur atom into dethiobiotin via a radical-based mechanism. The protein is Biotin synthase of Bacillus cereus (strain B4264).